The sequence spans 217 residues: Protein-L-isoaspartate O-methyltransferase (217 aa).

Residue S67 is part of the active site.

The protein belongs to the methyltransferase superfamily. L-isoaspartyl/D-aspartyl protein methyltransferase family.

The protein localises to the cytoplasm. It carries out the reaction [protein]-L-isoaspartate + S-adenosyl-L-methionine = [protein]-L-isoaspartate alpha-methyl ester + S-adenosyl-L-homocysteine. Its function is as follows. Catalyzes the methyl esterification of L-isoaspartyl residues in peptides and proteins that result from spontaneous decomposition of normal L-aspartyl and L-asparaginyl residues. It plays a role in the repair and/or degradation of damaged proteins. In Azoarcus sp. (strain BH72), this protein is Protein-L-isoaspartate O-methyltransferase.